The primary structure comprises 369 residues: Biglycan (369 aa).

The first 16 residues, 1 to 16 (MCPLWLLTLLLALSQA), serve as a signal peptide directing secretion. A propeptide spanning residues 17-37 (LPFEQKGFWDFTLDDGLLMMN) is cleaved from the precursor. Residues Ser-42 and Ser-48 are each glycosylated (O-linked (Xyl...) (glycosaminoglycan) serine). 2 disulfide bridges follow: Cys-64-Cys-70 and Cys-68-Cys-77. 12 LRR repeats span residues 83–103 (KTVPKEISPDTTLLDLQNNDI), 104–127 (SELRKDDFKGLQHLYALVLVNNKI), 128–151 (SKIHEKAFSPLRKLQKLYISKNHL), 152–172 (VEIPPNLPSSLVELRIHDNRI), 173–196 (RKVPKGVFSGLRNMNCIEMGGNPL), 197–221 (ENSGFEPGAFDGLKLNYLRISEAKL), 222–242 (TGIPKDLPETLNELHLDHNKI), 243–266 (QAIELEDLLRYSKLYRLGLGHNQI), 267–290 (RMIENGSLSFLPTLRELHLDNNKL), 291–313 (SRVPAGLPDLKLLQVVYLHSNNI), 314–343 (TKVGINDFCPMGFGVKRAYYNGISLFNNPV), and 344–369 (PYWEVQPATFRCVTDRLAIQFGNYKK). Asn-271 and Asn-312 each carry an N-linked (GlcNAc...) asparagine glycan. The cysteines at positions 322 and 355 are disulfide-linked.

Belongs to the small leucine-rich proteoglycan (SLRP) family. SLRP class I subfamily. The two attached glycosaminoglycan chains can be either chondroitin sulfate or dermatan sulfate. In terms of tissue distribution, found in several connective tissues, especially in articular cartilages.

Its subcellular location is the secreted. It is found in the extracellular space. It localises to the extracellular matrix. May be involved in collagen fiber assembly. The chain is Biglycan (Bgn) from Mus musculus (Mouse).